The following is a 71-amino-acid chain: Mitotic-spindle organizing protein 1B (71 aa).

This sequence belongs to the MOZART1 family. Homo- and heteromultimer. Part of the gamma-tubulin complex. Interacts with TUBB2/TUBB3, GIP2, GCP3 and TSA1 (via C-terminal domain). Mostly expressed in siliques and flowers, and, to a lower extent, in leaves, roots and seedlings, with highest levels in young tissues and meristematic cells, and the vasculature.

It is found in the cytoplasm. Its subcellular location is the cytoskeleton. The protein resides in the microtubule organizing center. The protein localises to the spindle. It localises to the nucleus. It is found in the phragmoplast. Its subcellular location is the nucleus envelope. In terms of biological role, required for gamma-tubulin complex recruitment to the microtubule organizing centers (MTOCs). During mitosis, modulates gamma-tubulin complex localization, spindle stability and chromosomal segregation. Necessary for gametophyte development and embryogenesis. The protein is Mitotic-spindle organizing protein 1B (GIP1) of Arabidopsis thaliana (Mouse-ear cress).